Reading from the N-terminus, the 242-residue chain is Platelet-derived growth factor subunit B (242 aa).

Positions 1–20 (MNRCWALFLSLCCYLRLVSA) are cleaved as a signal peptide. Positions 21-81 (EGDPIPEELY…ELESLSRGRR (61 aa)) are cleaved as a propeptide — removed in mature form. N-linked (GlcNAc...) asparagine glycosylation is present at Asn-63. 3 cysteine pairs are disulfide-bonded: Cys-97–Cys-141, Cys-130–Cys-178, and Cys-134–Cys-180. The span at 219-232 (PPKGKHRKFKHTHD) shows a compositional bias: basic residues. The disordered stretch occupies residues 219–242 (PPKGKHRKFKHTHDKKALKETLGA). Positions 233–242 (KKALKETLGA) are enriched in basic and acidic residues.

The protein belongs to the PDGF/VEGF growth factor family. In terms of assembly, antiparallel homodimer; disulfide-linked. Antiparallel heterodimer with PDGFA; disulfide-linked. The PDGFB homodimer interacts with PDGFRA and PDGFRB homodimers, and with heterodimers formed by PDGFRA and PDGFRB. The heterodimer composed of PDGFA and PDGFB interacts with PDGFRB homodimers, and with heterodimers formed by PDGFRA and PDGFRB. Interacts with XLKD1. Interacts with LRP1. Interacts with SORL1 (via the N-terminal ectodomain). Interacts with CD82; this interaction inhibits PDGFB-mediated signaling pathway.

The protein localises to the secreted. In terms of biological role, growth factor that plays an essential role in the regulation of embryonic development, cell proliferation, cell migration, survival and chemotaxis. Potent mitogen for cells of mesenchymal origin. Required for normal proliferation and recruitment of pericytes and vascular smooth muscle cells in the central nervous system, skin, lung, heart and placenta. Required for normal blood vessel development, and for normal development of kidney glomeruli. Plays an important role in wound healing. Signaling is modulated by the formation of heterodimers with PDGFA. The protein is Platelet-derived growth factor subunit B (PDGFB) of Canis lupus familiaris (Dog).